Here is a 367-residue protein sequence, read N- to C-terminus: UDP-N-acetylglucosamine--N-acetylmuramyl-(pentapeptide) pyrophosphoryl-undecaprenol N-acetylglucosamine transferase (367 aa).

Residues 10–12 (TGG), N124, S196, and Q300 contribute to the UDP-N-acetyl-alpha-D-glucosamine site.

Belongs to the glycosyltransferase 28 family. MurG subfamily.

Its subcellular location is the cell membrane. It catalyses the reaction di-trans,octa-cis-undecaprenyl diphospho-N-acetyl-alpha-D-muramoyl-L-alanyl-D-glutamyl-meso-2,6-diaminopimeloyl-D-alanyl-D-alanine + UDP-N-acetyl-alpha-D-glucosamine = di-trans,octa-cis-undecaprenyl diphospho-[N-acetyl-alpha-D-glucosaminyl-(1-&gt;4)]-N-acetyl-alpha-D-muramoyl-L-alanyl-D-glutamyl-meso-2,6-diaminopimeloyl-D-alanyl-D-alanine + UDP + H(+). Its pathway is cell wall biogenesis; peptidoglycan biosynthesis. In terms of biological role, cell wall formation. Catalyzes the transfer of a GlcNAc subunit on undecaprenyl-pyrophosphoryl-MurNAc-pentapeptide (lipid intermediate I) to form undecaprenyl-pyrophosphoryl-MurNAc-(pentapeptide)GlcNAc (lipid intermediate II). This is UDP-N-acetylglucosamine--N-acetylmuramyl-(pentapeptide) pyrophosphoryl-undecaprenol N-acetylglucosamine transferase from Natranaerobius thermophilus (strain ATCC BAA-1301 / DSM 18059 / JW/NM-WN-LF).